Reading from the N-terminus, the 143-residue chain is Antitumor antibiotic C-1027 apoprotein (143 aa).

Positions Met1–Ala33 are cleaved as a signal peptide. 2 cysteine pairs are disulfide-bonded: Cys69–Cys78 and Cys119–Cys124.

Belongs to the neocarzinostatin family.

Binds non-covalently to a chromophore which is the cytotoxic and mutagenic component of the antibiotic. The chromophore binds to DNA as a weak intercalator and causes single- and double-strand breaks. The sequence is that of Antitumor antibiotic C-1027 apoprotein (cagA) from Streptomyces globisporus.